The sequence spans 310 residues: uncharacterized protein (310 aa).

2 disordered regions span residues 22–163 (LARQ…PVEH) and 178–209 (EAEA…VEGD). 2 stretches are compositionally biased toward basic and acidic residues: residues 56–66 (IIRDDHHHAGP) and 183–197 (TEVR…ERHA). A compositionally biased stretch (low complexity) spans 198-209 (AAAAAGTDVEGD). 3 helical membrane-spanning segments follow: residues 231 to 251 (ALVV…FIAF), 257 to 277 (WNSI…VVSV), and 286 to 306 (IAST…PLAL).

The protein to M.leprae ML2433.

It is found in the cell membrane. This is an uncharacterized protein from Mycobacterium tuberculosis (strain CDC 1551 / Oshkosh).